Reading from the N-terminus, the 449-residue chain is Adenylosuccinate synthetase isozyme 1 A (449 aa).

Over residues 1-10 the composition is skewed to polar residues; it reads MSHKSCYTNP. A disordered region spans residues 1–22; sequence MSHKSCYTNPGTGGKRPRNDKG. GTP contacts are provided by residues 34–40 and 62–64; these read GDEGKGK and GHT. D35 (proton acceptor) is an active-site residue. D35 and G62 together coordinate Mg(2+). Residue D35 participates in substrate binding. IMP contacts are provided by residues 35-38, 60-63, T155, R169, N248, T263, and R327; these read DEGK and NAGH. The Proton donor role is filled by H63. Substrate is bound at residue 323-329; the sequence is VTTGRKR. GTP-binding positions include R329, 355–357, and 437–440; these read KLD and GVGK.

The protein belongs to the adenylosuccinate synthetase family. In terms of assembly, homodimer. Mg(2+) is required as a cofactor.

The protein localises to the cytoplasm. It catalyses the reaction IMP + L-aspartate + GTP = N(6)-(1,2-dicarboxyethyl)-AMP + GDP + phosphate + 2 H(+). Its pathway is purine metabolism; AMP biosynthesis via de novo pathway; AMP from IMP: step 1/2. Component of the purine nucleotide cycle (PNC), which interconverts IMP and AMP to regulate the nucleotide levels in various tissues, and which contributes to glycolysis and ammoniagenesis. Catalyzes the first committed step in the biosynthesis of AMP from IMP. The polypeptide is Adenylosuccinate synthetase isozyme 1 A (adss1a) (Salmo salar (Atlantic salmon)).